A 550-amino-acid polypeptide reads, in one-letter code: CTP synthase (550 aa).

Positions 1–272 are amidoligase domain; the sequence is MKTKFIFITG…DQKITSFLNL (272 aa). Position 14 (serine 14) interacts with CTP. A UTP-binding site is contributed by serine 14. Residue 15–20 participates in ATP binding; it reads SLGKGL. Tyrosine 55 contacts L-glutamine. An ATP-binding site is contributed by aspartate 72. Mg(2+)-binding residues include aspartate 72 and glutamate 146. Residues 153 to 155, 193 to 198, and lysine 229 contribute to the CTP site; these read DIE and KTKPTQ. Residues 193–198 and lysine 229 contribute to the UTP site; that span reads KTKPTQ. The 254-residue stretch at 297–550 folds into the Glutamine amidotransferase type-1 domain; sequence TITIVGKYVG…IHAACNHNKQ (254 aa). Glycine 359 serves as a coordination point for L-glutamine. Cysteine 386 functions as the Nucleophile; for glutamine hydrolysis in the catalytic mechanism. Residues 387 to 390, glutamate 410, and arginine 478 each bind L-glutamine; that span reads LGMQ. Residues histidine 523 and glutamate 525 contribute to the active site.

This sequence belongs to the CTP synthase family. Homotetramer.

It carries out the reaction UTP + L-glutamine + ATP + H2O = CTP + L-glutamate + ADP + phosphate + 2 H(+). The catalysed reaction is L-glutamine + H2O = L-glutamate + NH4(+). The enzyme catalyses UTP + NH4(+) + ATP = CTP + ADP + phosphate + 2 H(+). It functions in the pathway pyrimidine metabolism; CTP biosynthesis via de novo pathway; CTP from UDP: step 2/2. Allosterically activated by GTP, when glutamine is the substrate; GTP has no effect on the reaction when ammonia is the substrate. The allosteric effector GTP functions by stabilizing the protein conformation that binds the tetrahedral intermediate(s) formed during glutamine hydrolysis. Inhibited by the product CTP, via allosteric rather than competitive inhibition. Catalyzes the ATP-dependent amination of UTP to CTP with either L-glutamine or ammonia as the source of nitrogen. Regulates intracellular CTP levels through interactions with the four ribonucleotide triphosphates. The protein is CTP synthase of Lawsonia intracellularis (strain PHE/MN1-00).